The primary structure comprises 145 residues: UPF0299 membrane protein plu1549 (145 aa).

4 helical membrane-spanning segments follow: residues 6–26, 34–54, 65–85, and 95–115; these read VLIVGWQYLRAFVLIYLCLLT, LPIIIPGSIIGMLILFVLLAF, GCSLLLKNMTLLFLPIGVGVM, and IIPIVFSCLISTAIVMIIVAY.

This sequence belongs to the UPF0299 family.

The protein resides in the cell inner membrane. The chain is UPF0299 membrane protein plu1549 from Photorhabdus laumondii subsp. laumondii (strain DSM 15139 / CIP 105565 / TT01) (Photorhabdus luminescens subsp. laumondii).